A 395-amino-acid polypeptide reads, in one-letter code: Acid ceramidase (395 aa).

The first 21 residues, 1 to 21, serve as a signal peptide directing secretion; that stretch reads MLGRSRLALVLLAAAVSCAVA. A disulfide bridge links Cys-31 with Cys-340. Cys-143 functions as the Nucleophile in the catalytic mechanism. N-linked (GlcNAc...) asparagine glycans are attached at residues Asn-173, Asn-195, Asn-259, Asn-286, Asn-342, and Asn-348. Cys-388 and Cys-392 form a disulfide bridge.

It belongs to the acid ceramidase family. In terms of assembly, heterodimer; disulfide-linked. The heterodimer is composed of the disulfide-linked alpha and beta chains produced by autocatalytic cleavage of the precursor. N-glycosylated. In terms of processing, proteolytically cleaved into two chains alpha and beta that remain associated via a disulfide bond. Cleavage gives rise to a conformation change that activates the enzyme. The same catalytic Cys residue mediates the autoproteolytic cleavage and subsequent hydrolysis of lipid substrates. The beta chain may undergo an additional C-terminal processing.

It localises to the lysosome. The protein resides in the secreted. The catalysed reaction is an N-acylsphing-4-enine + H2O = sphing-4-enine + a fatty acid. It carries out the reaction N-dodecanoylsphing-4-enine + H2O = dodecanoate + sphing-4-enine. The enzyme catalyses N-tetradecanoylsphing-4-enine + H2O = tetradecanoate + sphing-4-enine. It catalyses the reaction N-hexadecanoylsphing-4-enine + H2O = sphing-4-enine + hexadecanoate. The catalysed reaction is N-octadecanoylsphing-4-enine + H2O = sphing-4-enine + octadecanoate. It carries out the reaction N-dodecanoyl-(4R)-hydroxysphinganine + H2O = (4R)-hydroxysphinganine + dodecanoate. The enzyme catalyses N-(dodecanoyl)-sphinganine + H2O = dodecanoate + sphinganine. It catalyses the reaction N-(acetyl)-sphing-4-enine + H2O = sphing-4-enine + acetate. The catalysed reaction is N-(hexanoyl)sphing-4-enine + H2O = hexanoate + sphing-4-enine. It carries out the reaction N-octanoylsphing-4-enine + H2O = octanoate + sphing-4-enine. The enzyme catalyses N-(9Z-octadecenoyl)-sphing-4-enine + H2O = sphing-4-enine + (9Z)-octadecenoate. It catalyses the reaction N-dodecanoylethanolamine + H2O = dodecanoate + ethanolamine. It functions in the pathway lipid metabolism; sphingolipid metabolism. Functionally, lysosomal ceramidase that hydrolyzes sphingolipid ceramides into sphingosine and free fatty acids at acidic pH. Ceramides, sphingosine, and its phosphorylated form sphingosine-1-phosphate are bioactive lipids that mediate cellular signaling pathways regulating several biological processes including cell proliferation, apoptosis and differentiation. Has a higher catalytic efficiency towards C12-ceramides versus other ceramides. Also catalyzes the reverse reaction allowing the synthesis of ceramides from fatty acids and sphingosine. For the reverse synthetic reaction, the natural sphingosine D-erythro isomer is more efficiently utilized as a substrate compared to D-erythro-dihydrosphingosine and D-erythro-phytosphingosine, while the fatty acids with chain lengths of 12 or 14 carbons are the most efficiently used. Also has an N-acylethanolamine hydrolase activity. By regulating the levels of ceramides, sphingosine and sphingosine-1-phosphate in the epidermis, mediates the calcium-induced differentiation of epidermal keratinocytes. Also indirectly regulates tumor necrosis factor/TNF-induced apoptosis. By regulating the intracellular balance between ceramides and sphingosine, in adrenocortical cells, probably also acts as a regulator of steroidogenesis. The polypeptide is Acid ceramidase (Macaca fascicularis (Crab-eating macaque)).